The following is a 156-amino-acid chain: Insulin (156 aa).

Residues 1 to 31 (MSKFLLQSHSANACLLTLLLTLASNLDISLA) form the signal peptide. 4 disulfides stabilise this stretch: C37-C114, C49-C119, C61-C128, and C112-C115. Positions 79 to 93 (DTENVNDKLRGILLN) are cleaved as a propeptide — c peptide beta. The propeptide at 96-102 (EAFSYLT) is c peptide alpha. A propeptide spans 141 to 156 (TGRSNSGHAQLEDNFS) (d peptide). Positions 144–156 (SNSGHAQLEDNFS) are cleaved as a propeptide — d peptide short form. E152 carries the post-translational modification 4-carboxyglutamate.

It belongs to the insulin family. In terms of assembly, heterodimer of a B chain or a B chain' and an A chain probably linked by three disulfide bonds. Expressed in the central region of the cerebral ganglia mostly within the F and C clusters.

Its subcellular location is the secreted. Involved in glucose metabolism. The chain is Insulin (PIN) from Aplysia californica (California sea hare).